Reading from the N-terminus, the 102-residue chain is Small ribosomal subunit protein uS10 (102 aa).

It belongs to the universal ribosomal protein uS10 family. Part of the 30S ribosomal subunit.

In terms of biological role, involved in the binding of tRNA to the ribosomes. The polypeptide is Small ribosomal subunit protein uS10 (Limosilactobacillus reuteri (strain DSM 20016) (Lactobacillus reuteri)).